The following is a 227-amino-acid chain: Phosphatidylserine decarboxylase proenzyme (227 aa).

Residue Ser184 is the Schiff-base intermediate with substrate; via pyruvic acid of the active site. Residue Ser184 is modified to Pyruvic acid (Ser); by autocatalysis.

Belongs to the phosphatidylserine decarboxylase family. PSD-A subfamily. As to quaternary structure, heterodimer of a large membrane-associated beta subunit and a small pyruvoyl-containing alpha subunit. The cofactor is pyruvate. Is synthesized initially as an inactive proenzyme. Formation of the active enzyme involves a self-maturation process in which the active site pyruvoyl group is generated from an internal serine residue via an autocatalytic post-translational modification. Two non-identical subunits are generated from the proenzyme in this reaction, and the pyruvate is formed at the N-terminus of the alpha chain, which is derived from the carboxyl end of the proenzyme. The post-translation cleavage follows an unusual pathway, termed non-hydrolytic serinolysis, in which the side chain hydroxyl group of the serine supplies its oxygen atom to form the C-terminus of the beta chain, while the remainder of the serine residue undergoes an oxidative deamination to produce ammonia and the pyruvoyl prosthetic group on the alpha chain.

The protein localises to the cell membrane. The catalysed reaction is a 1,2-diacyl-sn-glycero-3-phospho-L-serine + H(+) = a 1,2-diacyl-sn-glycero-3-phosphoethanolamine + CO2. It functions in the pathway phospholipid metabolism; phosphatidylethanolamine biosynthesis; phosphatidylethanolamine from CDP-diacylglycerol: step 2/2. Catalyzes the formation of phosphatidylethanolamine (PtdEtn) from phosphatidylserine (PtdSer). The chain is Phosphatidylserine decarboxylase proenzyme from Ehrlichia ruminantium (strain Gardel).